Here is a 391-residue protein sequence, read N- to C-terminus: MASIEEIRQAPRADGPATILAIGTATPPNAIYQADYPDYYFRVTKSEHMTELKEKFRRMCDKSMIKKRYMYLTEEILKENPNLCEYMGSSLDTRQDMVVSEVPRLGKEAAVKAIKEWGQPKSKITHVIMCTTSGVDMPGADYQLTKLLGLRPSVRRFMLYQQGCFAGGTVLRLAKDLAENNKDARVLVVCSEITAICFRGPTEAALDSMVGQALFGDGAGALIVGSDPDLSIERPLFQMAWAGQTLLPDSDGAIDGHLREVGLTFHLLKDVPGIISKNITNALEDAFSPIGVSDWNNLFWIAHPGGPAILDQVEAKLGLKEEKLAATRNVLSDFGNMSSACVLFILDEMRKKSLRDGATTTGEGLDWGVLFGFGPSLTVETVVLHSVPLNC.

Residue C164 is part of the active site.

Belongs to the thiolase-like superfamily. Chalcone/stilbene synthases family.

It catalyses the reaction (E)-4-coumaroyl-CoA + 3 malonyl-CoA + 3 H(+) = 2',4,4',6'-tetrahydroxychalcone + 3 CO2 + 4 CoA. It functions in the pathway secondary metabolite biosynthesis; flavonoid biosynthesis. Its function is as follows. The primary product of this enzyme is 4,2',4',6'-tetrahydroxychalcone (also termed naringenin-chalcone or chalcone) which can under specific conditions spontaneously isomerize into naringenin. This chain is Chalcone synthase (CHS), found in Dianthus caryophyllus (Carnation).